A 359-amino-acid chain; its full sequence is 3-dehydroquinate synthase (359 aa).

NAD(+)-binding positions include 69–74 (DGEKYK), 103–107 (GVVGD), 127–128 (TT), lysine 140, lysine 149, and 167–170 (TLDT). Zn(2+) contacts are provided by glutamate 182, histidine 245, and histidine 262.

It belongs to the sugar phosphate cyclases superfamily. Dehydroquinate synthase family. Co(2+) is required as a cofactor. Requires Zn(2+) as cofactor. The cofactor is NAD(+).

It is found in the cytoplasm. It catalyses the reaction 7-phospho-2-dehydro-3-deoxy-D-arabino-heptonate = 3-dehydroquinate + phosphate. It participates in metabolic intermediate biosynthesis; chorismate biosynthesis; chorismate from D-erythrose 4-phosphate and phosphoenolpyruvate: step 2/7. Functionally, catalyzes the conversion of 3-deoxy-D-arabino-heptulosonate 7-phosphate (DAHP) to dehydroquinate (DHQ). The sequence is that of 3-dehydroquinate synthase from Ruthia magnifica subsp. Calyptogena magnifica.